The sequence spans 207 residues: FMN-dependent NADH:quinone oxidoreductase (207 aa).

S10 contributes to the FMN binding site.

Belongs to the azoreductase type 1 family. Homodimer. Requires FMN as cofactor.

It carries out the reaction 2 a quinone + NADH + H(+) = 2 a 1,4-benzosemiquinone + NAD(+). It catalyses the reaction N,N-dimethyl-1,4-phenylenediamine + anthranilate + 2 NAD(+) = 2-(4-dimethylaminophenyl)diazenylbenzoate + 2 NADH + 2 H(+). In terms of biological role, quinone reductase that provides resistance to thiol-specific stress caused by electrophilic quinones. Its function is as follows. Also exhibits azoreductase activity. Catalyzes the reductive cleavage of the azo bond in aromatic azo compounds to the corresponding amines. The sequence is that of FMN-dependent NADH:quinone oxidoreductase from Shouchella clausii (strain KSM-K16) (Alkalihalobacillus clausii).